The chain runs to 508 residues: Photosystem II CP47 reaction center protein (508 aa).

6 helical membrane-spanning segments follow: residues 21–36 (SVHI…WAGS), 101–115 (IVFS…IWHW), 140–156 (GIHL…FGAF), 203–218 (IAAG…FHLS), 237–252 (VLSS…AFVV), and 457–472 (TFAL…HGAR).

It belongs to the PsbB/PsbC family. PsbB subfamily. As to quaternary structure, PSII is composed of 1 copy each of membrane proteins PsbA, PsbB, PsbC, PsbD, PsbE, PsbF, PsbH, PsbI, PsbJ, PsbK, PsbL, PsbM, PsbT, PsbX, PsbY, PsbZ, Psb30/Ycf12, at least 3 peripheral proteins of the oxygen-evolving complex and a large number of cofactors. It forms dimeric complexes. Binds multiple chlorophylls. PSII binds additional chlorophylls, carotenoids and specific lipids. serves as cofactor.

It is found in the plastid. Its subcellular location is the chloroplast thylakoid membrane. One of the components of the core complex of photosystem II (PSII). It binds chlorophyll and helps catalyze the primary light-induced photochemical processes of PSII. PSII is a light-driven water:plastoquinone oxidoreductase, using light energy to abstract electrons from H(2)O, generating O(2) and a proton gradient subsequently used for ATP formation. This chain is Photosystem II CP47 reaction center protein, found in Drimys granadensis.